The following is a 623-amino-acid chain: Leucine aminopeptidase 2 (623 aa).

A peptide contacts are provided by residues 140 to 142 and 266 to 271; these read QLE and PYGGME. Histidine 295 is a Zn(2+) binding site. Glutamate 296 (proton acceptor) is an active-site residue. Zn(2+) contacts are provided by histidine 299 and glutamate 318. The active-site Proton donor is tyrosine 382.

This sequence belongs to the peptidase M1 family. It depends on Zn(2+) as a cofactor.

The protein resides in the cytoplasm. It localises to the nucleus. The enzyme catalyses an epoxide + H2O = an ethanediol. Its function is as follows. Aminopeptidase that preferentially cleaves di- and tripeptides. Also has low epoxide hydrolase activity (in vitro). Can hydrolyze the epoxide leukotriene LTA(4) but it forms preferentially 5,6-dihydroxy-7,9,11,14-eicosatetraenoic acid rather than the cytokine leukotriene B(4) as the product compared to the homologous mammalian enzyme (in vitro). The protein is Leucine aminopeptidase 2 of Eremothecium gossypii (strain ATCC 10895 / CBS 109.51 / FGSC 9923 / NRRL Y-1056) (Yeast).